An 864-amino-acid polypeptide reads, in one-letter code: Bifunctional uridylyltransferase/uridylyl-removing enzyme (864 aa).

The tract at residues 1 to 328 (MLFPYFPLSE…QTNEPVQVRL (328 aa)) is uridylyltransferase. Residues 329–686 (LDKEFQCVNN…ISNRFSEGGT (358 aa)) form a uridylyl-removing region. The HD domain maps to 446–562 (VDEHIVRTLL…LHFAEAVQNN (117 aa)). 2 ACT domains span residues 687-766 (EIFV…TFRA) and 793-864 (EMEL…LEPK).

It belongs to the GlnD family. Mg(2+) is required as a cofactor.

It carries out the reaction [protein-PII]-L-tyrosine + UTP = [protein-PII]-uridylyl-L-tyrosine + diphosphate. The catalysed reaction is [protein-PII]-uridylyl-L-tyrosine + H2O = [protein-PII]-L-tyrosine + UMP + H(+). With respect to regulation, uridylyltransferase (UTase) activity is inhibited by glutamine, while glutamine activates uridylyl-removing (UR) activity. Modifies, by uridylylation and deuridylylation, the PII regulatory proteins (GlnB and homologs), in response to the nitrogen status of the cell that GlnD senses through the glutamine level. Under low glutamine levels, catalyzes the conversion of the PII proteins and UTP to PII-UMP and PPi, while under higher glutamine levels, GlnD hydrolyzes PII-UMP to PII and UMP (deuridylylation). Thus, controls uridylylation state and activity of the PII proteins, and plays an important role in the regulation of nitrogen assimilation and metabolism. The protein is Bifunctional uridylyltransferase/uridylyl-removing enzyme of Pasteurella multocida (strain Pm70).